The chain runs to 191 residues: MSLKIEIIKDKILSDNYFVLRNITYDLTRKNGEVIRHKREVYDRGNGATILLYNREKQSVVLIRQFRVATWVNGNPDGRLIETCAGLLDNDAPEVCIRKEAIEETGFAVGEVKKLFELYMSPGGVTELVYFFIAEYTDAQRANAGGGVEDEDIDVLEIPFEQALEMIKTGEIQDGKALILLQYLQISGLMA.

Residues Tyr-17, Lys-38–Glu-40, Arg-67, and Ala-85–Leu-87 each bind GDP-alpha-D-mannose. Residues Asp-43–Leu-180 enclose the Nudix hydrolase domain. 3 residues coordinate Mg(2+): Ala-85, Glu-100, and Glu-104. The Nudix box motif lies at Gly-86–Gly-106. GDP-alpha-D-mannose contacts are provided by residues Glu-104, Glu-127, Asp-150–Glu-151, and Lys-176. Position 151 (Glu-151) interacts with Mg(2+).

The protein belongs to the Nudix hydrolase family. NudK subfamily. In terms of assembly, homodimer. Requires Mg(2+) as cofactor.

The catalysed reaction is GDP-alpha-D-mannose + H2O = alpha-D-mannose 1-phosphate + GMP + 2 H(+). Functionally, nucleoside diphosphate sugar hydrolase that hydrolyzes GDP-mannose as its preferred substrate, yielding GMP and mannose-1-phosphate. The chain is GDP-mannose pyrophosphatase (nudK) from Enterobacter sp. (strain 638).